The chain runs to 711 residues: Ribosomal RNA large subunit methyltransferase K/L (711 aa).

One can recognise a THUMP domain in the interval Asp42–Leu153.

Belongs to the methyltransferase superfamily. RlmKL family.

The protein resides in the cytoplasm. The enzyme catalyses guanosine(2445) in 23S rRNA + S-adenosyl-L-methionine = N(2)-methylguanosine(2445) in 23S rRNA + S-adenosyl-L-homocysteine + H(+). It carries out the reaction guanosine(2069) in 23S rRNA + S-adenosyl-L-methionine = N(2)-methylguanosine(2069) in 23S rRNA + S-adenosyl-L-homocysteine + H(+). Specifically methylates the guanine in position 2445 (m2G2445) and the guanine in position 2069 (m7G2069) of 23S rRNA. This Xanthomonas oryzae pv. oryzae (strain MAFF 311018) protein is Ribosomal RNA large subunit methyltransferase K/L.